A 75-amino-acid chain; its full sequence is DNA-directed RNA polymerase subunit omega (75 aa).

The protein belongs to the RNA polymerase subunit omega family. In terms of assembly, in cyanobacteria the RNAP catalytic core is composed of 2 alpha, 1 beta, 1 beta', 1 gamma and 1 omega subunit. When a sigma factor is associated with the core the holoenzyme is formed, which can initiate transcription.

The catalysed reaction is RNA(n) + a ribonucleoside 5'-triphosphate = RNA(n+1) + diphosphate. Functionally, promotes RNA polymerase assembly. Latches the N- and C-terminal regions of the beta' subunit thereby facilitating its interaction with the beta and alpha subunits. This is DNA-directed RNA polymerase subunit omega from Synechococcus sp. (strain CC9311).